Here is a 175-residue protein sequence, read N- to C-terminus: Cuticle protein 16.5, isoform B (175 aa).

Tandem repeats lie at residues 17–20 (AAPA), 25–28 (AAPA), 31–34 (AAPA), 38–41 (AAPA), 44–47 (AAPA), 51–54 (AAPA), 57–60 (AAPA), 64–67 (AAPA), 70–73 (AAPA), 77–80 (AAPA), 83–86 (AAPA), 91–94 (AAPA), 99–102 (AAPA), 106–109 (AAPA), 134–137 (AAPA), 144–147 (AAPA), 151–154 (AAPA), 158–161 (AAPA), and 165–168 (AAPA).

Its function is as follows. Component of the cuticle of migratory locust which contains more than 100 different structural proteins. The sequence is that of Cuticle protein 16.5, isoform B from Locusta migratoria (Migratory locust).